The following is a 310-amino-acid chain: Pirin-like protein At1g50590 (310 aa).

This sequence belongs to the pirin family.

The protein resides in the nucleus. The polypeptide is Pirin-like protein At1g50590 (Arabidopsis thaliana (Mouse-ear cress)).